The primary structure comprises 78 residues: Neurogranin (78 aa).

The residue at position 1 (Met1) is an N-acetylmethionine. Cys3 and Cys51 form a disulfide bridge. The region spanning 26–47 is the IQ domain; the sequence is ANAAAAKIQASFRGHMARKKIK. Phosphoserine; by PHK and PKC is present on Ser36. Residues 39-78 are disordered; that stretch reads GHMARKKIKSGECGRKGPGPGGPGGAGGARGGAGGGPSGD. Residues 48-78 form the Collagen-like domain; the sequence is SGECGRKGPGPGGPGGAGGARGGAGGGPSGD. A compositionally biased stretch (gly residues) spans 54-78; the sequence is KGPGPGGPGGAGGARGGAGGGPSGD. The residue at position 68 (Arg68) is a Citrulline; partial. Omega-N-methylarginine is present on Arg68.

It belongs to the neurogranin family. Interacts with apo-calmodulin; this interaction decreases the affinity of calmodulin for calcium ions. Post-translationally, disulfide bond formation is redox-sensitive. The cysteine residues are readily oxidized by several nitric acid (NO) donors and other oxidants to form intramolecular disulfide. Cys-51 can form a disulfide with any other of the cysteine residues with an order of reactivity Cys-9 &gt; Cys-4 &gt; Cys-3. Phosphorylated at Ser-36 by PHK and PKC, phosphorylation prevents interaction with Calmodulin and interrupts several learning- and memory-associated functions.

It localises to the cytoplasm. Its subcellular location is the synapse. The protein resides in the cell projection. It is found in the dendritic spine. Functionally, regulates the affinity of calmodulin for calcium. Involved in synaptic plasticity and spatial learning. The chain is Neurogranin (Nrgn) from Mus musculus (Mouse).